Consider the following 308-residue polypeptide: Porphobilinogen deaminase (308 aa).

Cys243 carries the post-translational modification S-(dipyrrolylmethanemethyl)cysteine.

The protein belongs to the HMBS family. As to quaternary structure, monomer. The cofactor is dipyrromethane.

It catalyses the reaction 4 porphobilinogen + H2O = hydroxymethylbilane + 4 NH4(+). The protein operates within porphyrin-containing compound metabolism; protoporphyrin-IX biosynthesis; coproporphyrinogen-III from 5-aminolevulinate: step 2/4. Functionally, tetrapolymerization of the monopyrrole PBG into the hydroxymethylbilane pre-uroporphyrinogen in several discrete steps. The sequence is that of Porphobilinogen deaminase from Nitrosomonas europaea (strain ATCC 19718 / CIP 103999 / KCTC 2705 / NBRC 14298).